A 175-amino-acid chain; its full sequence is Peptide deformylase (175 aa).

Cys99 and His141 together coordinate Fe cation. The active site involves Glu142. His145 lines the Fe cation pocket.

The protein belongs to the polypeptide deformylase family. Fe(2+) serves as cofactor.

It carries out the reaction N-terminal N-formyl-L-methionyl-[peptide] + H2O = N-terminal L-methionyl-[peptide] + formate. Removes the formyl group from the N-terminal Met of newly synthesized proteins. Requires at least a dipeptide for an efficient rate of reaction. N-terminal L-methionine is a prerequisite for activity but the enzyme has broad specificity at other positions. This is Peptide deformylase from Rickettsia prowazekii (strain Madrid E).